The sequence spans 425 residues: MTSNTTEIPYHFLPYVRIQYDWQLAYKQDSDNCWVAYQKDLKNTIHGSVHSTKIDENNFKFESDYGFKLTPNKENKNNIRVENDKYSIEIYAPEKQLKVSGGKKRITSMGVSHLGELGVYGSTDGTLEVFETGDGQIRRKLDGHVGDVDLAMFFPSGRVILSGSSDSRLKIWDAIEGTCASTLVGHIGGITSASLVDRGRNLVSCSRDGTSKLWDIPTSSIISNLTKLSRPINDSFIASSLLDSIPTTTTTNSNDNNKVDEREVGTDGKTLIIAAEEGFLQAIDLRSKNMISQMNVVQSGEKSTRSVAFNACHVHKNYIIGGDHNGSIYFWDKRNLNSPFCRLQFTNSPIHHIKANSSNSKIANSIWVTSGDGCCFLLDLDKNQIITSLSGIDTDVVTSFNIVGNQAYLTSRDSIIRCYNNLLNI.

WD repeat units follow at residues 101 to 140, 143 to 182, 185 to 224, 299 to 341, and 345 to 382; these read GGKK…IRRK, GHVG…CAST, GHIG…IISN, SGEK…SPFC, and FTNS…DLDK.

It belongs to the WD repeat PAAF1/RPN14 family. In terms of assembly, interacts with proteasome 26S subunit ATPases.

Its function is as follows. Inhibits proteasome 26S assembly and activity by impairing the association of the 19S regulatory complex with the 20S core. The sequence is that of Probable proteasomal ATPase-associated factor 1 (paaf1) from Dictyostelium discoideum (Social amoeba).